A 140-amino-acid polypeptide reads, in one-letter code: Nucleoside diphosphate kinase (140 aa).

ATP is bound by residues Lys-11, Phe-59, Arg-87, Thr-93, Arg-104, and Asn-114. The Pros-phosphohistidine intermediate role is filled by His-117.

This sequence belongs to the NDK family. In terms of assembly, homotetramer. Mg(2+) serves as cofactor.

Its subcellular location is the cytoplasm. The catalysed reaction is a 2'-deoxyribonucleoside 5'-diphosphate + ATP = a 2'-deoxyribonucleoside 5'-triphosphate + ADP. The enzyme catalyses a ribonucleoside 5'-diphosphate + ATP = a ribonucleoside 5'-triphosphate + ADP. Functionally, major role in the synthesis of nucleoside triphosphates other than ATP. The ATP gamma phosphate is transferred to the NDP beta phosphate via a ping-pong mechanism, using a phosphorylated active-site intermediate. The sequence is that of Nucleoside diphosphate kinase from Rhizobium johnstonii (strain DSM 114642 / LMG 32736 / 3841) (Rhizobium leguminosarum bv. viciae).